We begin with the raw amino-acid sequence, 274 residues long: HTH-type transcriptional regulator GadX (274 aa).

The 98-residue stretch at 145 to 242 (TRVCTVINNN…GMTPTEYQER (98 aa)) folds into the HTH araC/xylS-type domain. 2 consecutive DNA-binding regions (H-T-H motif) follow at residues 162 to 183 (ARIASELLMSPSLLKKKLREEG) and 209 to 232 (IKRVAVSCGYHSVSYFIYVFRNYY).

Homodimer.

In terms of biological role, positively regulates the expression of about fifteen genes involved in acid resistance such as gadA, gadB and gadC. Depending on the conditions (growth phase and medium), can repress gadW. Negatively regulates perA expression in acidic conditions and positively regulates it in alkaline conditions. The sequence is that of HTH-type transcriptional regulator GadX (gadX) from Escherichia coli O127:H6 (strain E2348/69 / EPEC).